A 414-amino-acid chain; its full sequence is Cytochrome P450 CYP105Q4 (414 aa).

Residues 1 to 12 (MSDTLASPSPET) show a composition bias toward polar residues. The tract at residues 1-21 (MSDTLASPSPETASGIPDYPM) is disordered. 5 residues coordinate heme: histidine 108, glutamine 302, arginine 304, histidine 361, and cysteine 363.

It belongs to the cytochrome P450 family. Heme serves as cofactor.

Functionally, can bind oleic-acid derivatives, amphotericin B like precursors and a variety of nitrogen ligand donors. The chain is Cytochrome P450 CYP105Q4 from Mycobacterium marinum (strain ATCC BAA-535 / M).